A 637-amino-acid polypeptide reads, in one-letter code: Chaperone protein HtpG (637 aa).

An a; substrate-binding region spans residues 1–345 (MSQQETHGFQ…SNDLPLNVSR (345 aa)). Residues 346–562 (EILQDNQVTT…EGEMSTQMIK (217 aa)) form a b region. The segment at 563–637 (LMQAAGQAVP…MNQMLLANAK (75 aa)) is c.

It belongs to the heat shock protein 90 family. In terms of assembly, homodimer.

Its subcellular location is the cytoplasm. Functionally, molecular chaperone. Has ATPase activity. The sequence is that of Chaperone protein HtpG from Shewanella denitrificans (strain OS217 / ATCC BAA-1090 / DSM 15013).